A 543-amino-acid chain; its full sequence is CTP synthase (543 aa).

Positions 1–265 are amidoligase domain; that stretch reads MARYIFITGG…DDEVLAAFGI (265 aa). Ser-13 is a binding site for CTP. Ser-13 contacts UTP. 14 to 19 provides a ligand contact to ATP; sequence SLGKGL. Tyr-54 is an L-glutamine binding site. Asp-71 is a binding site for ATP. The Mg(2+) site is built by Asp-71 and Glu-139. CTP is bound by residues 146 to 148, 186 to 191, and Lys-222; these read DIE and KTKPTQ. UTP-binding positions include 186–191 and Lys-222; that span reads KTKPTQ. ATP is bound at residue 238 to 240; that stretch reads RDA. A Glutamine amidotransferase type-1 domain is found at 291-542; the sequence is TIAIVGKYTG…IQAAVVQSRL (252 aa). Position 353 (Gly-353) interacts with L-glutamine. Cys-380 serves as the catalytic Nucleophile; for glutamine hydrolysis. Residues 381-384, Glu-404, and Arg-470 contribute to the L-glutamine site; that span reads FGMQ. Catalysis depends on residues His-515 and Glu-517.

It belongs to the CTP synthase family. In terms of assembly, homotetramer.

The enzyme catalyses UTP + L-glutamine + ATP + H2O = CTP + L-glutamate + ADP + phosphate + 2 H(+). It carries out the reaction L-glutamine + H2O = L-glutamate + NH4(+). The catalysed reaction is UTP + NH4(+) + ATP = CTP + ADP + phosphate + 2 H(+). It participates in pyrimidine metabolism; CTP biosynthesis via de novo pathway; CTP from UDP: step 2/2. With respect to regulation, allosterically activated by GTP, when glutamine is the substrate; GTP has no effect on the reaction when ammonia is the substrate. The allosteric effector GTP functions by stabilizing the protein conformation that binds the tetrahedral intermediate(s) formed during glutamine hydrolysis. Inhibited by the product CTP, via allosteric rather than competitive inhibition. Catalyzes the ATP-dependent amination of UTP to CTP with either L-glutamine or ammonia as the source of nitrogen. Regulates intracellular CTP levels through interactions with the four ribonucleotide triphosphates. The protein is CTP synthase of Nitrobacter winogradskyi (strain ATCC 25391 / DSM 10237 / CIP 104748 / NCIMB 11846 / Nb-255).